The sequence spans 49 residues: uncharacterized protein (49 aa).

The first 22 residues, 1-22 (MVFLLFLSFVLSSIFLVPLVYM), serve as a signal peptide directing secretion.

The protein resides in the secreted. This is an uncharacterized protein from Dictyostelium discoideum (Social amoeba).